The following is a 397-amino-acid chain: ATP phosphoribosyltransferase regulatory subunit (397 aa).

It belongs to the class-II aminoacyl-tRNA synthetase family. HisZ subfamily. In terms of assembly, heteromultimer composed of HisG and HisZ subunits.

It is found in the cytoplasm. The protein operates within amino-acid biosynthesis; L-histidine biosynthesis; L-histidine from 5-phospho-alpha-D-ribose 1-diphosphate: step 1/9. Functionally, required for the first step of histidine biosynthesis. May allow the feedback regulation of ATP phosphoribosyltransferase activity by histidine. The chain is ATP phosphoribosyltransferase regulatory subunit from Nitrosococcus oceani (strain ATCC 19707 / BCRC 17464 / JCM 30415 / NCIMB 11848 / C-107).